A 1199-amino-acid chain; its full sequence is Putative mitoferrin (1199 aa).

The chain crosses the membrane as a helical span at residues 32–52 (VPLWQHIFCGSIAGLMEHVFM). 13 N-linked (GlcNAc...) asparagine glycosylation sites follow: Asn-92, Asn-171, Asn-208, Asn-268, Asn-326, Asn-353, Asn-443, Asn-499, Asn-539, Asn-649, Asn-708, Asn-715, and Asn-723. Residues 730–750 (GVNVVVLGCIPAHALYFSTFE) form a helical membrane-spanning segment. Asn-763 and Asn-772 each carry an N-linked (GlcNAc...) asparagine glycan. Residues 792–873 (LNYFSIAVSG…ICTNEKMKKI (82 aa)) form a Solcar 1 repeat. The next 2 helical transmembrane spans lie at 795 to 815 (FSIA…ITPI) and 845 to 865 (LYLS…IMIC). N-linked (GlcNAc...) asparagine glycosylation is found at Asn-914, Asn-922, Asn-965, Asn-1013, Asn-1022, Asn-1041, and Asn-1056. The Solcar 2 repeat unit spans residues 1109–1191 (SYFVCAGIGG…WGTYETMKRF (83 aa)). The chain crosses the membrane as a helical span at residues 1111–1131 (FVCAGIGGGIAAVLTNPLDVI).

This sequence belongs to the mitochondrial carrier (TC 2.A.29) family.

The protein localises to the mitochondrion membrane. Its function is as follows. Putative iron transporter. The polypeptide is Putative mitoferrin (Plasmodium falciparum (isolate 3D7)).